The chain runs to 156 residues: SsrA-binding protein (156 aa).

Belongs to the SmpB family.

It localises to the cytoplasm. In terms of biological role, required for rescue of stalled ribosomes mediated by trans-translation. Binds to transfer-messenger RNA (tmRNA), required for stable association of tmRNA with ribosomes. tmRNA and SmpB together mimic tRNA shape, replacing the anticodon stem-loop with SmpB. tmRNA is encoded by the ssrA gene; the 2 termini fold to resemble tRNA(Ala) and it encodes a 'tag peptide', a short internal open reading frame. During trans-translation Ala-aminoacylated tmRNA acts like a tRNA, entering the A-site of stalled ribosomes, displacing the stalled mRNA. The ribosome then switches to translate the ORF on the tmRNA; the nascent peptide is terminated with the 'tag peptide' encoded by the tmRNA and targeted for degradation. The ribosome is freed to recommence translation, which seems to be the essential function of trans-translation. This chain is SsrA-binding protein, found in Staphylococcus haemolyticus (strain JCSC1435).